Consider the following 882-residue polypeptide: MQDLDPVETQEWLDALESVLDREGEDRAHYLMTRMGELASRSGTQLPYAITTPYRNTIPVTHEARMPGDLFMERRIRSLVRWNALAMVMRANKHDPDLGGHISTFASSATLYDIGFNYFFQAPTDEHGGDLVFFQGHASPGVYARAFLEGRISEEQLENFRQEVDGNGLSSYPHPWLMPDFWQFPTVSMGLGPIQAIYQARFMKYLESRGFIPAGKQKVWCFMGDGECDEPESLGAISLAGREKLDNLIFVINCNLQRLDGPVRGNAKIIQELEGVFRGAEWNVNKVIWGRFWDPLFAKDTAGLLQQRMDEVIDGEYQNYKAKDGAYVREHFFGARPELLEMVKDLSDEEIWKLNRGGHDPYKVYAAYHQAVNHKGQPTVILAKTIKGYGTGSGEAKNIAHNVKKVDVDSLRAFRDKFDIPVKDADLEKLPFYKPEEGSAEAKYLAERRAALGGFMPVRRQKSMSVPVPPLETLKAMLDGSGDREISTTMAFVRIISQLVKDKELGPRIVPIVPDEARTFGMEGMFRQLGIYSSVGQLYEPVDKDQVMFYREDKKGQILEEGINEAGAMSSWIAAGTSYSTHNQPMLPFYIFYSMFGFQRIGDLAWAAGDSRAHGFLIGGTAGRTTLNGEGLQHEDGHSHLLASTIPNCRTYDPTYAYELAVIIREGSRQMIEEQQDIFYYITVMNENYVQPAMPKGAEEGIIKGMYLLEEDKKEAAHHVQLLGSGTILREVEEAAKLLRNDFGIGADVWSVPSFNELRRDGLAVERWNRLHPGQKPKQSYVEECLGGRRGPVIASTDYMKLYAEQIRQWVPSKEYKVLGTDGFGRSDSRKKLRNFFEVDRHWVVLAALEALADRGDIEPKVVAEAIAKYGIDPEKRNPLDC.

As to quaternary structure, homodimer. Part of the PDH complex, consisting of multiple copies of pyruvate dehydrogenase (E1), dihydrolipoamide acetyltransferase (E2) and lipoamide dehydrogenase (E3). The cofactor is thiamine diphosphate.

It catalyses the reaction N(6)-[(R)-lipoyl]-L-lysyl-[protein] + pyruvate + H(+) = N(6)-[(R)-S(8)-acetyldihydrolipoyl]-L-lysyl-[protein] + CO2. Functionally, component of the pyruvate dehydrogenase (PDH) complex, that catalyzes the overall conversion of pyruvate to acetyl-CoA and CO(2). The chain is Pyruvate dehydrogenase E1 component (aceE) from Pseudomonas aeruginosa (strain ATCC 15692 / DSM 22644 / CIP 104116 / JCM 14847 / LMG 12228 / 1C / PRS 101 / PAO1).